An 81-amino-acid polypeptide reads, in one-letter code: Delta-actitoxin-Aeq2d (81 aa).

The signal sequence occupies residues 1 to 19 (MNRLMILVFAAVILALASA). The propeptide occupies 20-25 (DDVDIA). 3 disulfide bridges follow: cysteine 31–cysteine 78, cysteine 33–cysteine 68, and cysteine 61–cysteine 79.

The protein belongs to the sea anemone sodium channel inhibitory toxin family. Type I subfamily.

The protein localises to the secreted. Its subcellular location is the nematocyst. Binds specifically to voltage-gated sodium channels (Nav), thereby delaying their inactivation during signal transduction. Causes death to crabs. The polypeptide is Delta-actitoxin-Aeq2d (Actinia equina (Beadlet anemone)).